The primary structure comprises 291 residues: MQLKKAFWKLASLLPLSLLLFLGGCDKKLAVLNPQGPVAKAQYDLIVWSFLLMSLIIAIVFILFTVILIRYREKPENMDYEPPEQHGNTLLEIIWTLVPVIIVIALSIPTVKATYASEEVPKESKHIKPVEIYVTSANWKWLFSYPEEKIETVNYLNIPAGVPIQFKLTSVGPMNAFWVPELGGMKYTMDGMIMDLYLQADKPGSYLGRSANFSGEGFTHMEFEVEAKTKEKYDKWVKEVQQTAPKLTEDKYNEIVKPGVVGRMTFSSHHLSYVDPKSLEYCDYNYYKNKK.

The signal sequence occupies residues Met1 to Lys28. The next 2 helical transmembrane spans lie at Ser49 to Ile69 and Leu91 to Val111.

It belongs to the cytochrome c oxidase subunit 2 family.

Its subcellular location is the cell membrane. It catalyses the reaction 2 a quinol + O2 = 2 a quinone + 2 H2O. Its function is as follows. Catalyzes quinol oxidation with the concomitant reduction of oxygen to water. Subunit II transfers the electrons from a quinol to the binuclear center of the catalytic subunit I. In Bacillus anthracis, this protein is Quinol oxidase subunit 2.